Consider the following 306-residue polypeptide: MPVRHLLGLADMPAAEINEFLENALPMKQIISRDIKKVPTLRGKTVVTLFYEPSTRTRMSFELAAKYLSADTVNVSASASSATKGESLADTARTIAALGADLVVLRHPCAGAPHLLARMIDVPVVNAGDGMHEHPTQALLDLFTLREKRPDLEGLKLVIIGDILHSRVARSNIWALTRFGVDVHLVAPPTLLPAGIAAFGVTVHDRPEDALPDAGAVMVLRLQRERQQEGLIPDVREYARLYGLNSERLALTRPDAIVMHPGPMNRGIEIAHTVADGTRAVITDQVTNGVAVRMAVLYLLMLGRVD.

Carbamoyl phosphate contacts are provided by arginine 56 and threonine 57. Lysine 84 is a binding site for L-aspartate. Residues arginine 106, histidine 134, and glutamine 137 each contribute to the carbamoyl phosphate site. L-aspartate is bound by residues arginine 167 and arginine 221. The carbamoyl phosphate site is built by glycine 262 and proline 263.

It belongs to the aspartate/ornithine carbamoyltransferase superfamily. ATCase family. As to quaternary structure, heterododecamer (2C3:3R2) of six catalytic PyrB chains organized as two trimers (C3), and six regulatory PyrI chains organized as three dimers (R2).

It carries out the reaction carbamoyl phosphate + L-aspartate = N-carbamoyl-L-aspartate + phosphate + H(+). It functions in the pathway pyrimidine metabolism; UMP biosynthesis via de novo pathway; (S)-dihydroorotate from bicarbonate: step 2/3. Its function is as follows. Catalyzes the condensation of carbamoyl phosphate and aspartate to form carbamoyl aspartate and inorganic phosphate, the committed step in the de novo pyrimidine nucleotide biosynthesis pathway. This chain is Aspartate carbamoyltransferase catalytic subunit, found in Desulforudis audaxviator (strain MP104C).